A 712-amino-acid chain; its full sequence is Protein phosphatase 1 regulatory subunit 37 (712 aa).

Residues Met1–Pro12 show a composition bias toward pro residues. The segment at Met1–Ala47 is disordered. A compositionally biased stretch (acidic residues) spans Ala16 to Ala29. 2 positions are modified to phosphoserine: Ser56 and Ser62. 5 LRR repeats span residues Ser226–Ala246, Asn254–Gly275, Ser283–Cys303, Gly312–Gly332, and Ser340–Lys360. A disordered region spans residues Glu492 to Ser680. Acidic residues predominate over residues Ser514–Asp531. Phosphoserine is present on Ser583. Over residues Pro605–Pro626 the composition is skewed to pro residues. Residues Ser639–Gly651 are compositionally biased toward polar residues.

This sequence belongs to the PPP1R37 family. In terms of assembly, interacts with PPP1CA.

Its function is as follows. Inhibits phosphatase activity of protein phosphatase 1 (PP1) complexes. This is Protein phosphatase 1 regulatory subunit 37 (Ppp1r37) from Mus musculus (Mouse).